The primary structure comprises 101 residues: Large ribosomal subunit protein uL23 (101 aa).

This sequence belongs to the universal ribosomal protein uL23 family. Part of the 50S ribosomal subunit. Contacts protein L29, and trigger factor when it is bound to the ribosome.

In terms of biological role, one of the early assembly proteins it binds 23S rRNA. One of the proteins that surrounds the polypeptide exit tunnel on the outside of the ribosome. Forms the main docking site for trigger factor binding to the ribosome. The chain is Large ribosomal subunit protein uL23 from Kocuria rhizophila (strain ATCC 9341 / DSM 348 / NBRC 103217 / DC2201).